Consider the following 69-residue polypeptide: Putative membrane protein insertion efficiency factor (69 aa).

The protein belongs to the UPF0161 family.

It localises to the cell membrane. Could be involved in insertion of integral membrane proteins into the membrane. This is Putative membrane protein insertion efficiency factor from Clostridium botulinum (strain Okra / Type B1).